The following is a 330-amino-acid chain: Polyprenal reductase (330 aa).

Over 1–16 (MAGWAGAELSVLNPLR) the chain is Cytoplasmic. A helical transmembrane segment spans residues 17–37 (ALWLLLAAAFLLALLLQLAPA). At 38–89 (RLLPSCALFQDLIRYGKTKQSGSRRPAVCRAFDVPKRYFSHFYVVSVLWNGS) the chain is on the lumenal side. The helical transmembrane segment at 90–110 (LLWFLSQSLFLGAPFPSWLWA) threads the bilayer. Residues 111 to 136 (LLRTLGVTQFQALGMESKASRIQGKK) are Cytoplasmic-facing. The chain crosses the membrane as a helical span at residues 137-157 (LALSTFLVLVFLWVHSLRRLF). Topologically, residues 158-169 (ECFYVSVFSNTA) are lumenal. The helical transmembrane segment at 170 to 190 (IHVVQYCFGLVYYVLVGLTVL) threads the bilayer. Residues 191–206 (SQVPMNDKNVYALGKN) lie on the Cytoplasmic side of the membrane. Residues 207 to 227 (LLLQARWFHILGMMMFFWSSA) form a helical membrane-spanning segment. The Lumenal portion of the chain corresponds to 228 to 277 (HQYKCHVILSNLRRNKKGVVIHCQHRIPFGDWFEYVSSANYLAELMIYIS). Residues 278-298 (MAVTFGLHNVTWWLVVTYVFF) form a helical membrane-spanning segment. Over 299-330 (SQALSAFFNHRFYKSTFVSYPKHRKAFLPFLF) the chain is Cytoplasmic.

This sequence belongs to the steroid 5-alpha reductase family. Polyprenal reductase subfamily. Expressed in the 2 tissues tested i.e. testis and liver.

The protein resides in the endoplasmic reticulum membrane. It catalyses the reaction a di-trans,poly-cis-dolichal + NADP(+) = a di-trans,poly-cis-polyprenal + NADPH + H(+). The catalysed reaction is a 3-oxo-5alpha-steroid + NADP(+) = a 3-oxo-Delta(4)-steroid + NADPH + H(+). The enzyme catalyses androst-4-ene-3,17-dione + NADPH + H(+) = 5alpha-androstan-3,17-dione + NADP(+). It carries out the reaction 17beta-hydroxy-5alpha-androstan-3-one + NADP(+) = testosterone + NADPH + H(+). It participates in protein modification; protein glycosylation. Plays a key role in early steps of protein N-linked glycosylation by being involved in the conversion of polyprenol into dolichol. Acts as a polyprenal reductase that mediates the reduction of polyprenal into dolichal in a NADP-dependent mechanism. Dolichols are required for the synthesis of dolichol-linked monosaccharides and the oligosaccharide precursor used for N-glycosylation. Also able to convert testosterone (T) into 5-alpha-dihydrotestosterone (DHT). This Rattus norvegicus (Rat) protein is Polyprenal reductase.